Here is a 54-residue protein sequence, read N- to C-terminus: Large ribosomal subunit protein bL33B (54 aa).

Belongs to the bacterial ribosomal protein bL33 family.

The chain is Large ribosomal subunit protein bL33B from Saccharopolyspora erythraea (strain ATCC 11635 / DSM 40517 / JCM 4748 / NBRC 13426 / NCIMB 8594 / NRRL 2338).